The primary structure comprises 204 residues: Putative F-box protein L168 (204 aa).

The F-box domain occupies 1 to 46; the sequence is MNLCDLFDEIIIGIIDELSDRDKIKFMTTCSRFYYFIDKTKYFDIY. A disordered region spans residues 161-184; the sequence is NETNKITNNHTNKKINNNKKHQNN. Residues 171 to 183 show a composition bias toward basic residues; it reads TNKKINNNKKHQN.

The polypeptide is Putative F-box protein L168 (Acanthamoeba polyphaga (Amoeba)).